The following is a 605-amino-acid chain: Aspartate--tRNA(Asp/Asn) ligase (605 aa).

Position 183 (glutamate 183) interacts with L-aspartate. The segment at 207–210 (QLFK) is aspartate. Position 229 (arginine 229) interacts with L-aspartate. Residues 229-231 (RDE) and glutamine 238 each bind ATP. Histidine 457 contacts L-aspartate. Glutamate 497 contacts ATP. An L-aspartate-binding site is contributed by arginine 504. 549-552 (GLDR) serves as a coordination point for ATP.

The protein belongs to the class-II aminoacyl-tRNA synthetase family. Type 1 subfamily. In terms of assembly, homodimer.

The protein localises to the cytoplasm. It catalyses the reaction tRNA(Asx) + L-aspartate + ATP = L-aspartyl-tRNA(Asx) + AMP + diphosphate. In terms of biological role, aspartyl-tRNA synthetase with relaxed tRNA specificity since it is able to aspartylate not only its cognate tRNA(Asp) but also tRNA(Asn). Reaction proceeds in two steps: L-aspartate is first activated by ATP to form Asp-AMP and then transferred to the acceptor end of tRNA(Asp/Asn). The sequence is that of Aspartate--tRNA(Asp/Asn) ligase from Persephonella marina (strain DSM 14350 / EX-H1).